A 433-amino-acid chain; its full sequence is Glutamyl-tRNA reductase (433 aa).

Substrate contacts are provided by residues 49-52, Ser-109, 114-116, and Gln-120; these read TCNR and EGQ. The active-site Nucleophile is Cys-50. 198 to 203 contacts NADP(+); the sequence is GAGRMS.

The protein belongs to the glutamyl-tRNA reductase family. Homodimer.

The catalysed reaction is (S)-4-amino-5-oxopentanoate + tRNA(Glu) + NADP(+) = L-glutamyl-tRNA(Glu) + NADPH + H(+). The protein operates within porphyrin-containing compound metabolism; protoporphyrin-IX biosynthesis; 5-aminolevulinate from L-glutamyl-tRNA(Glu): step 1/2. It functions in the pathway porphyrin-containing compound metabolism; chlorophyll biosynthesis. In terms of biological role, catalyzes the NADPH-dependent reduction of glutamyl-tRNA(Glu) to glutamate 1-semialdehyde (GSA). In Prochlorococcus marinus subsp. pastoris (strain CCMP1986 / NIES-2087 / MED4), this protein is Glutamyl-tRNA reductase.